We begin with the raw amino-acid sequence, 237 residues long: Bax inhibitor 1 (237 aa).

The Cytoplasmic portion of the chain corresponds to 1 to 29; sequence MNIFDRKINFDALLKFSHITPSTQQHLKK. A Glycyl lysine isopeptide (Lys-Gly) (interchain with G-Cter in ubiquitin) cross-link involves residue lysine 7. The chain crosses the membrane as a helical span at residues 30-50; sequence VYASFALCMFVAAAGAYVHVV. Residues 51 to 52 are Lumenal-facing; sequence TH. A helical transmembrane segment spans residues 53-73; it reads FIQAGLLSALGSLALMIWLMA. Topologically, residues 74–86 are cytoplasmic; sequence TPHSHETEQKRLG. The helical transmembrane segment at 87-107 threads the bilayer; it reads LLAGFAFLTGVGLGPALELCI. Topologically, residues 108–112 are lumenal; sequence AVNPS. A helical membrane pass occupies residues 113-133; that stretch reads ILPTAFMGTAMIFTCFSLSAL. The Cytoplasmic portion of the chain corresponds to 134 to 139; the sequence is YARRRS. Residues 140 to 160 traverse the membrane as a helical segment; sequence YLFLGGILMSAMSLMLLSSLG. At 161–166 the chain is on the lumenal side; it reads NLFFGS. Residues 167–187 traverse the membrane as a helical segment; the sequence is IWLFQANLYLGLLVMCGFVLF. Topologically, residues 188-206 are cytoplasmic; sequence DTQLIIEKAEHGDKDYIWH. Residues 207 to 227 constitute an intramembrane region (helical); the sequence is CVDLFLDFVTLFRKLMLILAF. The Cytoplasmic portion of the chain corresponds to 228–237; the sequence is NEKDKKKEKK.

Belongs to the BI1 family. In terms of assembly, interacts with BCL2. Interacts with BCL2L1. Interacts with ERN1. Post-translationally, ubiquitinated by BFAR, leading to proteasomal degradation. Highly abundant in adult testis.

Its subcellular location is the endoplasmic reticulum membrane. Functionally, endoplasmic reticulum (ER)-resident protein that confers cellular protection as an anti-apoptotic protein by limiting multiple stress-inducing pathways surrounding the endoplasmic reticulum and mitochondria. Inhibits the activities of the key sensor for the endoplasmic reticulum unfolded protein response IRE1alpha/ERN1 both directly and by blocking BAX/BAK binding. Modulates ER calcium homeostasis by acting as a calcium-leak channel. Negatively regulates autophagy and autophagosome formation, especially during periods of nutrient deprivation, and reduces cell survival during starvation. This Mus musculus (Mouse) protein is Bax inhibitor 1 (Tmbim6).